We begin with the raw amino-acid sequence, 187 residues long: Probable cobalt-precorrin-6B C(15)-methyltransferase (decarboxylating) (187 aa).

S-adenosyl-L-methionine is bound by residues Thr-17, 41–45 (GCGTG), Asp-62, and Gly-91.

Belongs to the methyltransferase superfamily. Archaeal-type CbiT family.

The catalysed reaction is Co-precorrin-6B + S-adenosyl-L-methionine = Co-precorrin-7 + S-adenosyl-L-homocysteine + CO2. It participates in cofactor biosynthesis; adenosylcobalamin biosynthesis; cob(II)yrinate a,c-diamide from sirohydrochlorin (anaerobic route): step 8/10. Functionally, catalyzes the methylation of C-15 in cobalt-precorrin-6B followed by the decarboxylation of C-12 to form cobalt-precorrin-7. In Methanobrevibacter smithii (strain ATCC 35061 / DSM 861 / OCM 144 / PS), this protein is Probable cobalt-precorrin-6B C(15)-methyltransferase (decarboxylating).